A 291-amino-acid polypeptide reads, in one-letter code: S-adenosylmethionine uptake transporter (291 aa).

10 helical membrane passes run 4-24 (ALKTYSIGIGWFLLSLVSSSA), 41-61 (VAFFRFFFSSIVLLPFVVYYG), 74-91 (ILRGLLLFFGMTSWTYGL), 98-118 (TATVISFSIPLFTLILAVFFL), 121-141 (NIIWQRWVVTIVGFVGLVITL), 148-168 (FNPEMLYFVLAAISFAMLDII), 178-198 (MISMLFYSAIVTAVVSIPAAA), 206-226 (LFELALLFILGSSGSLILFLL), 237-257 (ATAPYRYLELVISAIAAYFIF), and 260-280 (FPDKSTLHGAVIIIPATLFII). 2 EamA domains span residues 21–141 (SSSA…VITL) and 160–280 (ISFA…LFII).

Belongs to the drug/metabolite transporter (DMT) superfamily. 10 TMS drug/metabolite exporter (DME) (TC 2.A.7.3) family.

It localises to the cell inner membrane. Its function is as follows. Transports S-adenosylmethionine. This Rickettsia bellii (strain RML369-C) protein is S-adenosylmethionine uptake transporter (sam).